Reading from the N-terminus, the 689-residue chain is Glycine--tRNA ligase beta subunit (689 aa).

This sequence belongs to the class-II aminoacyl-tRNA synthetase family. As to quaternary structure, tetramer of two alpha and two beta subunits.

It is found in the cytoplasm. It catalyses the reaction tRNA(Gly) + glycine + ATP = glycyl-tRNA(Gly) + AMP + diphosphate. This Erwinia tasmaniensis (strain DSM 17950 / CFBP 7177 / CIP 109463 / NCPPB 4357 / Et1/99) protein is Glycine--tRNA ligase beta subunit.